Here is a 141-residue protein sequence, read N- to C-terminus: MMSFVSLLVVGILFPAIQAKQFTKCELSQVLKDMDGYGDITLPEWICTIFHISGYDTKTIVHDNGSTEYGLFQINNKLWCRDNQIQSKNICGISCDKFLDDDLTDDMMCAKKILDNEGIDYWLAHKALCSEKLDQWLCEKM.

An N-terminal signal peptide occupies residues Met-1–Ala-19. A C-type lysozyme domain is found at Lys-20–Met-141. Cystine bridges form between Cys-25-Cys-138, Cys-47-Cys-129, Cys-80-Cys-95, and Cys-91-Cys-109. Residues Lys-97, Asp-100, Asp-102, Asp-105, and Asp-106 each contribute to the Ca(2+) site.

The protein belongs to the glycosyl hydrolase 22 family. Lactose synthase (LS) is a heterodimer of a catalytic component, beta1,4-galactosyltransferase (beta4Gal-T1) and a regulatory component, alpha-lactalbumin (LA). Mammary gland specific. Secreted in milk.

The protein localises to the secreted. Functionally, regulatory subunit of lactose synthase, changes the substrate specificity of galactosyltransferase in the mammary gland making glucose a good acceptor substrate for this enzyme. This enables LS to synthesize lactose, the major carbohydrate component of milk. In other tissues, galactosyltransferase transfers galactose onto the N-acetylglucosamine of the oligosaccharide chains in glycoproteins. In Sus scrofa (Pig), this protein is Alpha-lactalbumin (LALBA).